The chain runs to 238 residues: Tetraspanin-4 (238 aa).

Over 1 to 13 (MARACLQAVKYLM) the chain is Cytoplasmic. A helical membrane pass occupies residues 14–34 (FAFNLLFWLGGCGVLGVGIWL). Residues 35-55 (AATQGSFATLSSSFPSLSAAN) are Extracellular-facing. A helical transmembrane segment spans residues 56–76 (LLIITGAFVMAIGFVGCLGAI). Over 77-85 (KENKCLLLT) the chain is Cytoplasmic. A helical transmembrane segment spans residues 86–106 (FFLLLLLVFLLEATIAILFFA). Over 107-201 (YTDKIDRYAQ…ETVKVWLQEN (95 aa)) the chain is Extracellular. N-linked (GlcNAc...) asparagine glycans are attached at residues N152 and N161. A helical membrane pass occupies residues 202–222 (LLAVGIFGLCTALVQILGLTF). The Cytoplasmic segment spans residues 223–238 (AMTMYCQVVKADTYCA).

The protein belongs to the tetraspanin (TM4SF) family. Forms a complex with integrins.

It is found in the membrane. This chain is Tetraspanin-4 (TSPAN4), found in Pongo abelii (Sumatran orangutan).